We begin with the raw amino-acid sequence, 418 residues long: MSIIKNSVWNLFGYAIPTLIAIPSLGFLARGLGPEGFGVYTIAIALVGYAGIFDVGLTRSVIREIAIHRDNHHERTKVISTSTSFLVLFSCFGAFLLLIFSDGIVNYLKISGVEHSDIQLAFKLLAICIPLFILNQLWSAILEGDEKFGIVNIQKSISSSCIAGIPAIFVFYSATLSAAVAGLIFARVISILVSAYYVRNDIKISGVHFCYKTFKRLFFFGGWMTVSNIISPVMVYFDRFIVSNIMGADKVAFYSAPAEVILKLGIIPAAIGRAVFPRLSNIKDFKEFKRNVNKSLLLMFLICLPVIIIGLLYSGLVLKIWFGENYQINSFNILNVLLIGFFFNALAMIPFSAIQALGKSKITALIHCAELVPYLALLYFMVEKYGLLGAAISWSIRVILDALLLQWLYTRMCSVYEN.

The next 11 membrane-spanning stretches (helical) occupy residues 8 to 28 (VWNL…LGFL), 37 to 57 (FGVY…DVGL), 85 to 105 (FLVL…DGIV), 124 to 144 (LLAI…ILEG), 165 to 185 (IPAI…GLIF), 217 to 237 (LFFF…MVYF), 251 to 271 (VAFY…PAAI), 297 to 317 (LLMF…SGLV), 334 to 354 (LNVL…FSAI), 362 to 382 (ITAL…YFMV), and 385 to 405 (YGLL…ALLL).

This sequence belongs to the polysaccharide synthase family.

It is found in the cell inner membrane. Its pathway is bacterial outer membrane biogenesis; lipopolysaccharide biosynthesis. Could be an O-antigen transporter. In Shigella flexneri, this protein is Putative O-antigen transporter (rfbE).